A 149-amino-acid polypeptide reads, in one-letter code: Myoglobin (149 aa).

At A2 the chain carries N-acetylalanine. The 142-residue stretch at 2-143 (ABWDKVNSVW…ICSDIEKEYK (142 aa)) folds into the Globin domain. H89 is a binding site for heme b.

It belongs to the globin family. Monomeric.

The protein resides in the cytoplasm. The protein localises to the sarcoplasm. It carries out the reaction Fe(III)-heme b-[protein] + nitric oxide + H2O = Fe(II)-heme b-[protein] + nitrite + 2 H(+). The enzyme catalyses H2O2 + AH2 = A + 2 H2O. Functionally, monomeric heme protein which primary function is to store oxygen and facilitate its diffusion within muscle tissues. Reversibly binds oxygen through a pentacoordinated heme iron and enables its timely and efficient release as needed during periods of heightened demand. Depending on the oxidative conditions of tissues and cells, and in addition to its ability to bind oxygen, it also has a nitrite reductase activity whereby it regulates the production of bioactive nitric oxide. Under stress conditions, like hypoxia and anoxia, it also protects cells against reactive oxygen species thanks to its pseudoperoxidase activity. The protein is Myoglobin (mb) of Hemitriakis japanica (Japanese topeshark).